Consider the following 272-residue polypeptide: Cytochrome b-c1 complex subunit Rieske-1, mitochondrial (272 aa).

A mitochondrion-targeting transit peptide spans Met1–Phe60. The segment at Asp27–Ser46 is disordered. Topologically, residues Ser61–Arg109 are mitochondrial matrix. The chain crosses the membrane as a helical span at residues Ala110 to Leu132. The Mitochondrial intermembrane portion of the chain corresponds to Lys133–Gly272. The Rieske domain maps to Val201–Leu270. [2Fe-2S] cluster-binding residues include Cys215, His217, Cys234, and His237. A disulfide bridge connects residues Cys220 and Cys236.

The protein belongs to the Rieske iron-sulfur protein family. Component of the ubiquinol-cytochrome c oxidoreductase (cytochrome b-c1 complex, complex III, CIII), a multisubunit enzyme composed of 10 subunits. The complex is composed of 3 respiratory subunits cytochrome b (MT-CYB), cytochrome c1 (CYC1-1 or CYC1-2) and Rieske protein (UCR1-1 or UCR1-2), 2 core protein subunits MPPalpha1 (or MPPalpha2) and MPPB, and 5 low-molecular weight protein subunits QCR7-1 (or QCR7-2), UCRQ-1 (or UCRQ-2), QCR9, UCRY and probably QCR6-1 (or QCR6-2). The complex exists as an obligatory dimer and forms supercomplexes (SCs) in the inner mitochondrial membrane with NADH-ubiquinone oxidoreductase (complex I, CI), resulting in different assemblies (supercomplexes SCI(1)III(2) and SCI(2)III(4)). It depends on [2Fe-2S] cluster as a cofactor.

It is found in the mitochondrion inner membrane. It catalyses the reaction a quinol + 2 Fe(III)-[cytochrome c](out) = a quinone + 2 Fe(II)-[cytochrome c](out) + 2 H(+)(out). Its function is as follows. Component of the ubiquinol-cytochrome c oxidoreductase, a multisubunit transmembrane complex that is part of the mitochondrial electron transport chain which drives oxidative phosphorylation. The respiratory chain contains 3 multisubunit complexes succinate dehydrogenase (complex II, CII), ubiquinol-cytochrome c oxidoreductase (cytochrome b-c1 complex, complex III, CIII) and cytochrome c oxidase (complex IV, CIV), that cooperate to transfer electrons derived from NADH and succinate to molecular oxygen, creating an electrochemical gradient over the inner membrane that drives transmembrane transport and the ATP synthase. The cytochrome b-c1 complex catalyzes electron transfer from ubiquinol to cytochrome c, linking this redox reaction to translocation of protons across the mitochondrial inner membrane, with protons being carried across the membrane as hydrogens on the quinol. In the process called Q cycle, 2 protons are consumed from the matrix, 4 protons are released into the intermembrane space and 2 electrons are passed to cytochrome c. The Rieske protein is a catalytic core subunit containing a [2Fe-2S] iron-sulfur cluster. It cycles between 2 conformational states during catalysis to transfer electrons from the quinol bound in the Q(0) site in cytochrome b to cytochrome c1. The sequence is that of Cytochrome b-c1 complex subunit Rieske-1, mitochondrial from Arabidopsis thaliana (Mouse-ear cress).